The sequence spans 103 residues: Sec-independent protein translocase protein TatA (103 aa).

The helical transmembrane segment at 1–21 threads the bilayer; it reads MSLGPWEIAIIVLLIIVLFGA. The tract at residues 42 to 103 is disordered; sequence VKEMQKDDET…QNYEDPNRTP (62 aa). Low complexity predominate over residues 52–90; sequence PAQPEQQPQGYQHPQQIEAPQNLQQPNFQQHYQNQPQQP. The span at 94–103 shows a compositional bias: basic and acidic residues; that stretch reads QNYEDPNRTP.

It belongs to the TatA/E family. The Tat system comprises two distinct complexes: a TatABC complex, containing multiple copies of TatA, TatB and TatC subunits, and a separate TatA complex, containing only TatA subunits. Substrates initially bind to the TatABC complex, which probably triggers association of the separate TatA complex to form the active translocon.

It localises to the cell membrane. In terms of biological role, part of the twin-arginine translocation (Tat) system that transports large folded proteins containing a characteristic twin-arginine motif in their signal peptide across membranes. TatA could form the protein-conducting channel of the Tat system. This is Sec-independent protein translocase protein TatA from Corynebacterium efficiens (strain DSM 44549 / YS-314 / AJ 12310 / JCM 11189 / NBRC 100395).